The chain runs to 484 residues: Signal transduction histidine-protein kinase/phosphatase MprB (484 aa).

The span at 1–10 shows a compositional bias: low complexity; it reads MAADNAGRWP. The disordered stretch occupies residues 1–23; sequence MAADNAGRWPGQPPGPPAPTHPA. At 1–31 the chain is on the cytoplasmic side; the sequence is MAADNAGRWPGQPPGPPAPTHPASSVSLRWR. Residues 11–20 show a composition bias toward pro residues; the sequence is GQPPGPPAPT. The chain crosses the membrane as a helical span at residues 32-52; sequence VMLLAMSMVVISVVLMAVAVF. The Extracellular portion of the chain corresponds to 53-172; it reads AVTSRALYDD…TGKVLKRLGT (120 aa). A helical membrane pass occupies residues 173–193; sequence VLLIVGGLGVAVAAIAGGMVA. Positions 194–246 constitute an HAMP domain; that stretch reads SAGLRPVGRLTQAAERVARTDDLRPIPVIGNDELARLTETFNMMLRALAESRE. At 194-484 the chain is on the cytoplasmic side; the sequence is SAGLRPVGRL…SPAGSDEAER (291 aa). Residues 254-474 enclose the Histidine kinase domain; it reads DAGHELRTPL…AMHVVLPGRP (221 aa). At His-257 the chain carries Phosphohistidine; by autocatalysis.

Mg(2+) is required as a cofactor. The cofactor is Mn(2+). Post-translationally, autophosphorylated.

It is found in the cell membrane. It catalyses the reaction ATP + protein L-histidine = ADP + protein N-phospho-L-histidine.. In terms of biological role, member of the two-component regulatory system MprB/MprA which contributes to maintaining a balance among several systems involved in stress resistance and is required for establishment and maintenance of persistent infection in the host. In response to environmental signals MprB acts both as a membrane-associated protein kinase that undergoes autophosphorylation and subsequently transfers the phosphate to MprA, and a protein phosphatase that dephosphorylates phospho-MprA. This chain is Signal transduction histidine-protein kinase/phosphatase MprB (mprB), found in Mycolicibacterium vanbaalenii (strain DSM 7251 / JCM 13017 / BCRC 16820 / KCTC 9966 / NRRL B-24157 / PYR-1) (Mycobacterium vanbaalenii).